A 434-amino-acid polypeptide reads, in one-letter code: MLDSKFLRQDIEQTAARLAARGYELDVATVTALEEKRKTLQVKTQELQSQRNASAKAIGQAKAKGEDAQPLLDAVANLGSELDAAKAQQDVVLAAINDIALAIPNLPDESVPAGKDEDDNVEILTWGTPKKFDFDVKDHVDVGQDLNGLDFEMGVKISGARFTVMRGQVARMHRALTQYMLDTHTDKNGYTEMYVPYLVNSASLYGTSQLPKFAGDLFHTLGLVNDDGEQQSGFSLIPTAEVPLTNSARDEIYDESDLPIRLTAHTPCFRSEAGSYGRDTRGLIRQHQFDKVELVQLVKPEDSMATLEELTGHAEQILQELELPYRKVILCMGDMGFGSAKTYDLEVWLPAQNTYREISSCSNMADFQARRMQARFRREGAKKPELLHTLNGSGLAVGRTLVAILENYQQADGSVVVPEVLRPYMGGLEVIGKQ.

Position 239-241 (239-241 (TAE)) interacts with L-serine. 270-272 (RSE) serves as a coordination point for ATP. Glu-293 contributes to the L-serine binding site. 357–360 (EISS) provides a ligand contact to ATP. Ser-393 is a binding site for L-serine.

It belongs to the class-II aminoacyl-tRNA synthetase family. Type-1 seryl-tRNA synthetase subfamily. Homodimer. The tRNA molecule binds across the dimer.

The protein localises to the cytoplasm. It carries out the reaction tRNA(Ser) + L-serine + ATP = L-seryl-tRNA(Ser) + AMP + diphosphate + H(+). The catalysed reaction is tRNA(Sec) + L-serine + ATP = L-seryl-tRNA(Sec) + AMP + diphosphate + H(+). The protein operates within aminoacyl-tRNA biosynthesis; selenocysteinyl-tRNA(Sec) biosynthesis; L-seryl-tRNA(Sec) from L-serine and tRNA(Sec): step 1/1. Catalyzes the attachment of serine to tRNA(Ser). Is also able to aminoacylate tRNA(Sec) with serine, to form the misacylated tRNA L-seryl-tRNA(Sec), which will be further converted into selenocysteinyl-tRNA(Sec). This Pseudoalteromonas translucida (strain TAC 125) protein is Serine--tRNA ligase.